We begin with the raw amino-acid sequence, 446 residues long: ATP synthase subunit b-delta (446 aa).

The interval 1 to 168 (MSTFIGQLVG…PKGADVEYPL (168 aa)) is ATP synthase subunit b. The helical transmembrane segment at 4 to 24 (FIGQLVGFAAIVYLVWWYVVP) threads the bilayer. Residues 169–446 (LAKMRSASRR…LVAAEAALPD (278 aa)) are ATP synthase subunit delta.

In the N-terminal section; belongs to the ATPase B chain family. This sequence in the C-terminal section; belongs to the ATPase delta chain family. In terms of assembly, F-type ATPases have 2 components, F(1) - the catalytic core - and F(0) - the membrane proton channel. F(1) has five subunits: alpha(3), beta(3), gamma(1), delta(1), epsilon(1). F(0) has three main subunits: a(1), b(2) and c(10-14). The alpha and beta chains form an alternating ring which encloses part of the gamma chain. F(1) is attached to F(0) by a central stalk formed by the gamma and epsilon chains, while a peripheral stalk is formed by the delta and b chains.

Its subcellular location is the cell membrane. Functionally, f(1)F(0) ATP synthase produces ATP from ADP in the presence of a proton or sodium gradient. F-type ATPases consist of two structural domains, F(1) containing the extramembraneous catalytic core and F(0) containing the membrane proton channel, linked together by a central stalk and a peripheral stalk. During catalysis, ATP synthesis in the catalytic domain of F(1) is coupled via a rotary mechanism of the central stalk subunits to proton translocation. Its function is as follows. This fusion protein includes a component of the F(0) channel (subunit b) and of the F(1) subunit (subunit delta). Two copies of subunit b and one of delta together form the peripheral 'stator' stalk which links F(1) to F(0). The polypeptide is ATP synthase subunit b-delta (atpFH) (Mycobacterium leprae (strain Br4923)).